Here is a 589-residue protein sequence, read N- to C-terminus: WD repeat-containing protein 26 homolog (589 aa).

A disordered region spans residues 1 to 57; that stretch reads MGVVEDTEPPLKRAKRLADEPNGFSANSSVRGSSVNSNSLGDLMARPLPSQGDDETI. The segment covering 25–39 has biased composition (low complexity); sequence SANSSVRGSSVNSNS. One can recognise a LisH domain in the interval 64–96; sequence RKSEFVRIITRALYSLGYDKTGAMLEEESGISL. A CTLH domain is found at 97–154; sequence HNSTIKLFLQQVKDGKWDQSVKTLHRIGFPDEKAVKAASFLLLEQKFLEFLKVEKIAD. 7 WD repeats span residues 272–311, 317–358, 360–398, 401–440, 442–480, 484–526, and 529–569; these read SHTDEVWFLQFSHNGKYLASSSKDQTAIIWEISADGHISL, GHHK…HMYE, GGISPISCGWYPDGQGIIAGMTDRSICMWDLDGREKECW, QRTQKVSDIAMTDDGKWLVSVCKDSVISLFDREATVERLI, EEDMITSFSLSNDNKYILVNLLNQEIRLWNIEGDPKIVS, GHKR…LIVE, and GHAG…QQNQ.

As to quaternary structure, interacts with RANBPM. As to expression, expressed in roots, leaves and flowers.

The protein localises to the cytoplasm. In terms of biological role, acts as a component involved in the crosstalk regulation between light, hormone and abiotic stress response. The polypeptide is WD repeat-containing protein 26 homolog (Arabidopsis thaliana (Mouse-ear cress)).